Here is a 178-residue protein sequence, read N- to C-terminus: RNA pyrophosphohydrolase (178 aa).

The region spanning 18–171 (PYRPCVGLMV…KRKVYEQVVA (154 aa)) is the Nudix hydrolase domain. Positions 59-80 (GGIDKGEDPAQAALRELYEETG) match the Nudix box motif.

This sequence belongs to the Nudix hydrolase family. RppH subfamily. The cofactor is a divalent metal cation.

Its function is as follows. Accelerates the degradation of transcripts by removing pyrophosphate from the 5'-end of triphosphorylated RNA, leading to a more labile monophosphorylated state that can stimulate subsequent ribonuclease cleavage. This is RNA pyrophosphohydrolase from Brucella melitensis biotype 2 (strain ATCC 23457).